Here is a 1247-residue protein sequence, read N- to C-terminus: Nitric oxide synthase (1247 aa).

A disordered region spans residues 13–33; it reads EVAEGRESSKANHIGEERRGY. Ser146 provides a ligand contact to (6R)-L-erythro-5,6,7,8-tetrahydrobiopterin. Cys224 serves as a coordination point for heme b. Residues Gln287, Trp396, Tyr397, Glu401, and Asn406 each contribute to the L-arginine site. (6R)-L-erythro-5,6,7,8-tetrahydrobiopterin-binding residues include Trp487 and Phe500. Residue Tyr515 coordinates heme b. Residues 537-557 form a calmodulin-binding region; it reads PRRKFNFKQIARAVKFTSKLF. The Flavodoxin-like domain occupies 567-766; the sequence is ATVLYATETG…AFRKWAPEVF (200 aa). Position 712–743 (712–743) interacts with FMN; sequence VFALGSSAYPNFCAFGKYIDNILGELGGERLM. An FAD-binding FR-type domain is found at 795–1065; the sequence is NTVRYAPVAE…VRSAPSFHMS (271 aa). FAD-binding positions include 855-866 and 998-1008; these read YEPGDHVGIFPA and LQPRFYSISSS. NADP(+) contacts are provided by residues 1073-1091 and 1170-1185; these read ILIGPGTGIAPFRSFWQEW and KGHIYVCGDVTMAEHV.

The protein belongs to the NOS family. Heme b is required as a cofactor. Requires FAD as cofactor. FMN serves as cofactor.

It carries out the reaction 2 L-arginine + 3 NADPH + 4 O2 + H(+) = 2 L-citrulline + 2 nitric oxide + 3 NADP(+) + 4 H2O. Stimulated by calcium/calmodulin. Produces nitric oxide (NO) which is a messenger molecule with diverse functions throughout the body. Nitric oxide limits plasmodium development in the midgut. This Anopheles stephensi (Indo-Pakistan malaria mosquito) protein is Nitric oxide synthase.